The following is a 181-amino-acid chain: Large ribosomal subunit protein uL5 (181 aa).

It belongs to the universal ribosomal protein uL5 family. As to quaternary structure, part of the 50S ribosomal subunit; part of the 5S rRNA/L5/L18/L25 subcomplex. Contacts the 5S rRNA and the P site tRNA. Forms a bridge to the 30S subunit in the 70S ribosome.

This is one of the proteins that bind and probably mediate the attachment of the 5S RNA into the large ribosomal subunit, where it forms part of the central protuberance. In the 70S ribosome it contacts protein S13 of the 30S subunit (bridge B1b), connecting the 2 subunits; this bridge is implicated in subunit movement. Contacts the P site tRNA; the 5S rRNA and some of its associated proteins might help stabilize positioning of ribosome-bound tRNAs. The chain is Large ribosomal subunit protein uL5 from Onion yellows phytoplasma (strain OY-M).